A 496-amino-acid chain; its full sequence is Acyltransferase M4 (496 aa).

The active-site Proton acceptor is the histidine 163.

The protein belongs to the plant acyltransferase family. As to quaternary structure, monomer.

It functions in the pathway secondary metabolite biosynthesis. Its function is as follows. Acyltransferase; part of the gene cluster that mediates the biosynthesis of squalestatin S1 (SQS1, also known as zaragozic acid A), a heavily oxidized fungal polyketide that offers potent cholesterol lowering activity by targeting squalene synthase (SS). SQS1 is composed of a 2,8-dioxobicyclic[3.2.1]octane-3,4,5-tricarboxyclic acid core that is connected to two lipophilic polyketide arms. These initial steps feature the priming of an unusual benzoic acid starter unit onto the highly reducing polyketide synthase pks2, followed by oxaloacetate extension and product release to generate a tricarboxylic acid containing product. The phenylalanine ammonia lyase (PAL) M7 and the acyl-CoA ligase M9 are involved in transforming phenylalanine into benzoyl-CoA. The citrate synthase-like protein R3 is involved in connecting the C-alpha-carbons of the hexaketide chain and oxaloacetate to afford the tricarboxylic acid unit. The potential hydrolytic enzymes, M8 and M10, are in close proximity to pks2 and may participate in product release. On the other side, the tetraketide arm is synthesized by a the squalestatin tetraketide synthase pks1 and enzymatically esterified to the core in the last biosynthetic step, by the acetyltransferase M4. The biosynthesis of the tetraketide must involve 3 rounds of chain extension. After the first and second rounds methyl-transfer occurs, and in all rounds of extension the ketoreductase and dehydratase are active. The enoyl reductase and C-MeT of pks1 are not active in the final round of extension. The acetyltransferase M4 appears to have a broad substrate selectivity for its acyl CoA substrate, allowing the in vitro synthesis of novel squalestatins. The biosynthesis of SQS1 requires several oxidative steps likely performed by oxidoreductases M1, R1 and R2. Finally, in support of the identification of the cluster as being responsible for SQS1 production, the cluster contains a gene encoding a putative squalene synthase (SS) R6, suggesting a likely mechanism for self-resistance. This is Acyltransferase M4 from Phoma sp. (strain ATCC 20986 / MF5453).